The primary structure comprises 301 residues: Probable alpha-L-glutamate ligase (301 aa).

In terms of domain architecture, ATP-grasp spans 104-287 (LQLLSRKGIG…IAGIIIQYLE (184 aa)). Residues Lys141, 178–179 (EY), Asp187, and 211–213 (RSN) contribute to the ATP site. Residues Asp248, Glu260, and Asn262 each coordinate Mg(2+). Mn(2+) contacts are provided by Asp248, Glu260, and Asn262.

The protein belongs to the RimK family. Mg(2+) is required as a cofactor. The cofactor is Mn(2+).

The sequence is that of Probable alpha-L-glutamate ligase from Pseudomonas aeruginosa (strain UCBPP-PA14).